A 212-amino-acid chain; its full sequence is Regulatory protein RecX (212 aa).

This sequence belongs to the RecX family.

It localises to the cytoplasm. Functionally, modulates RecA activity. The protein is Regulatory protein RecX of Clostridium botulinum (strain Alaska E43 / Type E3).